The primary structure comprises 156 residues: Small ribosomal subunit protein uS7c (156 aa).

Belongs to the universal ribosomal protein uS7 family. As to quaternary structure, part of the 30S ribosomal subunit.

The protein resides in the plastid. It is found in the cyanelle. In terms of biological role, one of the primary rRNA binding proteins, it binds directly to 16S rRNA where it nucleates assembly of the head domain of the 30S subunit. This Cyanophora paradoxa protein is Small ribosomal subunit protein uS7c (rps7).